A 343-amino-acid chain; its full sequence is Sulfate/thiosulfate import ATP-binding protein CysA (343 aa).

Residues 3 to 233 (ILIENISKTF…PATPFVMGFM (231 aa)) enclose the ABC transporter domain. An ATP-binding site is contributed by 35-42 (GPSGSGKS).

Belongs to the ABC transporter superfamily. Sulfate/tungstate importer (TC 3.A.1.6) family.

The protein localises to the plastid. Its subcellular location is the chloroplast. It carries out the reaction sulfate(out) + ATP + H2O = sulfate(in) + ADP + phosphate + H(+). It catalyses the reaction thiosulfate(out) + ATP + H2O = thiosulfate(in) + ADP + phosphate + H(+). Its function is as follows. Part of the ABC transporter complex involved in sulfate/thiosulfate import. Responsible for energy coupling to the transport system. In Nephroselmis olivacea (Green alga), this protein is Sulfate/thiosulfate import ATP-binding protein CysA.